Reading from the N-terminus, the 855-residue chain is Protein KRI1 homolog (855 aa).

6 disordered regions span residues 47-67, 82-117, 130-196, 312-342, 424-453, and 589-855; these read VSESEFDSDSSSSEEDEVDPK, KDPCIYDKGTKFFSESSGDEDDKDGEAPKKKKKAKP, EHNG…KTKE, SLRRTDDKRKEKRKELKERKDQEKQQKMKEL, YDPRQHANGGGEDYEGHCEDDDFNMDCDYD, and KSLY…KKDN. Acidic residues predominate over residues 48–64; the sequence is SESEFDSDSSSSEEDEV. Residues 82 to 91 are compositionally biased toward basic and acidic residues; it reads KDPCIYDKGT. Phosphoserine occurs at positions 95, 97, 98, 137, and 138. The span at 160–176 shows a compositional bias: basic and acidic residues; sequence EEERRLKAEFRKVMNKE. S179 carries the post-translational modification Phosphoserine. Residues 307-362 adopt a coiled-coil conformation; sequence RTIEQSLRRTDDKRKEKRKELKERKDQEKQQKMKELELVKEMKRKEIDEKIRKLKA. Over residues 441–452 the composition is skewed to acidic residues; it reads CEDDDFNMDCDY. A compositionally biased stretch (low complexity) spans 609–619; that stretch reads VTPAEATAPAE. Residues 630-640 are compositionally biased toward basic residues; it reads KSKRKRLKRKA. Composition is skewed to basic and acidic residues over residues 650–664 and 674–692; these read VLKEESDSKDPKEAD and SSKKKVDTPSKKGKDDANQ. 3 stretches are compositionally biased toward polar residues: residues 720-748, 756-773, and 792-805; these read VQNGFQKPQNQANKSAKTKSNQPFKTTES, SNGNNPFNKPQSKSQQRQ, and ANGTNPFKKSNQKP. Low complexity predominate over residues 812 to 826; the sequence is KKTNNFKAKNKQNNN. The span at 842 to 855 shows a compositional bias: basic residues; it reads RKFHKREKYGKKDN.

It belongs to the KRI1 family.

This is Protein KRI1 homolog from Drosophila melanogaster (Fruit fly).